The primary structure comprises 319 residues: MLKLDLKERDSLDLRCIAGHHGLANPITISDLNRPGLVLSGFFDFVAYRRIQLFGRGEHAYLLALLEQGRYGAIEKMFTFDLPCCIFSHGITPPEKFLHLAEPSSCPILVTRLTSSELSLRLMRVLSNIFAPTIALHGVLVEVYGVGILISGDSGVGKSETALELIERGHRLVADDLVEISCVNGNSLIGRGVHKSIGHHMEIRGLGIINITQLYGVGSIRERKEIQMVVQLEEWNSSKAYDRLGTQELNTTILDVSVPLIEIPVRPGRNIPIILETAAMNERLKRMGYFSAKEFNQSVLKLMEQNAAHAPYYRPDDTY.

Residues histidine 137 and lysine 158 contribute to the active site. Residue 152–159 (GDSGVGKS) coordinates ATP. A Mg(2+)-binding site is contributed by serine 159. Aspartate 176 acts as the Proton acceptor; for phosphorylation activity. Proton donor; for dephosphorylation activity in catalysis. The important for the catalytic mechanism of both phosphorylation and dephosphorylation stretch occupies residues 201–210 (MEIRGLGIIN). Glutamate 202 is a binding site for Mg(2+). Arginine 243 is a catalytic residue. The segment at 264–269 (PVRPGR) is important for the catalytic mechanism of dephosphorylation.

The protein belongs to the HPrK/P family. As to quaternary structure, homohexamer. Requires Mg(2+) as cofactor.

It catalyses the reaction [HPr protein]-L-serine + ATP = [HPr protein]-O-phospho-L-serine + ADP + H(+). The catalysed reaction is [HPr protein]-O-phospho-L-serine + phosphate + H(+) = [HPr protein]-L-serine + diphosphate. Functionally, catalyzes the ATP- as well as the pyrophosphate-dependent phosphorylation of a specific serine residue in HPr, a phosphocarrier protein of the phosphoenolpyruvate-dependent sugar phosphotransferase system (PTS). HprK/P also catalyzes the pyrophosphate-producing, inorganic phosphate-dependent dephosphorylation (phosphorolysis) of seryl-phosphorylated HPr (P-Ser-HPr). The sequence is that of HPr kinase/phosphorylase (hprK) from Treponema pallidum (strain Nichols).